The primary structure comprises 144 residues: uncharacterized protein (144 aa).

A signal peptide spans 1–23 (MRKILLFATVIGFLIMVSGTLSY).

This is an uncharacterized protein from Archaeoglobus fulgidus (strain ATCC 49558 / DSM 4304 / JCM 9628 / NBRC 100126 / VC-16).